The following is a 314-amino-acid chain: Olfactory receptor 52B4 (314 aa).

At 1–27 (MPTVNHSGTSHTVFHLLGIPGLQDQHM) the chain is on the extracellular side. Residue Asn5 is glycosylated (N-linked (GlcNAc...) asparagine). A helical membrane pass occupies residues 28 to 48 (WISIPFFISYVTALLGNSLLI). Residues 49–56 (FIILTKRS) lie on the Cytoplasmic side of the membrane. A helical transmembrane segment spans residues 57–77 (LHEPMYLFLCMLAGADIVLST). Residues 78–101 (CTIPQALAIFWFRAGDISLDRCIT) are Extracellular-facing. A disulfide bridge connects residues Cys99 and Cys191. The helical transmembrane segment at 102 to 122 (QLFFIHSTFISESGILLVMAF) threads the bilayer. The Cytoplasmic segment spans residues 123–141 (DHYIAICYPLRYTTILTNA). A helical membrane pass occupies residues 142–162 (LIKKICVTVSLRSYGTIFPII). The Extracellular segment spans residues 163–198 (FLLKRLTFCQNNIIPHTFCEHIGLAKYACNDIRINI). A helical membrane pass occupies residues 199 to 219 (WYGFSILMSTVVLDVVLIFIS). At 220 to 239 (YMLILHAVFHMPSPDACHKA) the chain is on the cytoplasmic side. A helical transmembrane segment spans residues 240 to 260 (LNTFGSHVCIIILFYGSGIFT). Residues 261–275 (ILTQRFGRHIPPCIH) lie on the Extracellular side of the membrane. Residues 276–296 (IPLANVCILAPPMLNPIIYGI) traverse the membrane as a helical segment. The Cytoplasmic segment spans residues 297–314 (KTKQIQEQVVQFLFIKQK).

This sequence belongs to the G-protein coupled receptor 1 family.

It localises to the cell membrane. Functionally, odorant receptor. The chain is Olfactory receptor 52B4 (OR52B4) from Homo sapiens (Human).